The following is a 243-amino-acid chain: GrpE protein homolog, mitochondrial (243 aa).

Residues 42–75 are disordered; that stretch reads TEASKKEGKEDKAEAQGSQEPETAAETNKEAEGA. A compositionally biased stretch (basic and acidic residues) spans 44-55; it reads ASKKEGKEDKAE.

This sequence belongs to the GrpE family. As to quaternary structure, component of the PAM complex, at least composed of mtHsp70, MGE1, TIM44, PAM16, PAM17 and PAM18.

It is found in the mitochondrion matrix. In terms of biological role, essential component of the PAM complex, a complex required for the translocation of transit peptide-containing proteins from the inner membrane into the mitochondrial matrix in an ATP-dependent manner. Seems to control the nucleotide-dependent binding of SSC1 to substrate proteins. This chain is GrpE protein homolog, mitochondrial (mge1), found in Debaryomyces hansenii (strain ATCC 36239 / CBS 767 / BCRC 21394 / JCM 1990 / NBRC 0083 / IGC 2968) (Yeast).